The chain runs to 797 residues: Inactive dipeptidyl peptidase 10 (797 aa).

Residues 1–28 (MKQEQQPTPGARATQSQPADQELGSNSP) are disordered. Topologically, residues 1–34 (MKQEQQPTPGARATQSQPADQELGSNSPPQRNWK) are cytoplasmic. A helical; Signal-anchor for type II membrane protein membrane pass occupies residues 35–55 (GIAIALLVILVVCSLITMSVI). The Extracellular portion of the chain corresponds to 56–797 (LLTPDELTNS…VLPQEPEEDE (742 aa)). 4 N-linked (GlcNAc...) asparagine glycosylation sites follow: N64, N91, N112, and N120. Phosphotyrosine is present on residues Y139 and Y144. 4 N-linked (GlcNAc...) asparagine glycosylation sites follow: N258, N343, N518, and N749.

The protein belongs to the peptidase S9B family. DPPIV subfamily. In terms of assembly, may form oligomers. Interacts with KCND1 and KCND2. N-glycosylation is important for cell surface expression, specially at Asn-258, which is crucial. As to expression, detected in brain cortex (at protein level). Expressed in the brain, predominantly by neurons and not by glia.

It localises to the cell membrane. Promotes cell surface expression of the potassium channel KCND2. Modulates the activity and gating characteristics of the potassium channel KCND2. Has no dipeptidyl aminopeptidase activity. This is Inactive dipeptidyl peptidase 10 (Dpp10) from Mus musculus (Mouse).